The primary structure comprises 882 residues: Alanine--tRNA ligase (882 aa).

4 residues coordinate Zn(2+): histidine 576, histidine 580, cysteine 678, and histidine 682.

The protein belongs to the class-II aminoacyl-tRNA synthetase family. The cofactor is Zn(2+).

It localises to the cytoplasm. The catalysed reaction is tRNA(Ala) + L-alanine + ATP = L-alanyl-tRNA(Ala) + AMP + diphosphate. Its function is as follows. Catalyzes the attachment of alanine to tRNA(Ala) in a two-step reaction: alanine is first activated by ATP to form Ala-AMP and then transferred to the acceptor end of tRNA(Ala). Also edits incorrectly charged Ser-tRNA(Ala) and Gly-tRNA(Ala) via its editing domain. This chain is Alanine--tRNA ligase, found in Anaplasma marginale (strain St. Maries).